The primary structure comprises 2375 residues: CCR4-NOT transcription complex subunit 1 (2375 aa).

3 short sequence motifs (LXXLL) span residues 153 to 157 (LPDLL), 181 to 185 (LHLLL), and 223 to 227 (LAPLL). Position 318 is a phosphoserine (serine 318). An LXXLL motif is present at residues 570–574 (LSMLL). A disordered region spans residues 725–770 (SAAPHTQSMQGFPPNLGSAFSTPQSPAKAFPPLSTPNQTTAFSGIG). An interaction with ZFP36 region spans residues 799-1014 (NNDPFVQRKL…QGSITTPGSI (216 aa)). Position 1060 is a phosphoserine (serine 1060). Residues 1089–1604 (EPPENIQEKI…AQPMKQAWAT (516 aa)) are interaction with CNOT6, CNOT6L, CNOT7 and CNOT8. The segment covering 1314–1326 (QLSAPKKDVKQPE) has biased composition (basic and acidic residues). Positions 1314 to 1351 (QLSAPKKDVKQPEELPAITTTTTSTTPATSTTCTATVP) are disordered. Residues 1332–1349 (TTTTTSTTPATSTTCTAT) are compositionally biased toward low complexity. Short sequence motifs (LXXLL) lie at residues 1638-1642 (LRSLL), 1941-1945 (LIALL), and 2095-2099 (LRVLL).

Belongs to the CNOT1 family. In terms of assembly, component of the CCR4-NOT complex; distinct complexes seem to exist that differ in the participation of probably mutually exclusive catalytic subunits. In the complex, interacts directly with CNOT6, CNOT6L, CNOT7 or CNOT8. Interacts in a ligand-dependent fashion with ESR1 and RXRA. Interacts with NANOS2, TOB1 and ZFP36. Interacts with TNRC6A, TNRC6B or TNRC6C; the interactions are direct. Interacts with YTHDF2; the interaction is direct and promotes recruitment of the CCR4-NOT complex to N6-methyladenosine (m6A)-containing mRNAs, leading to their deadenylation and subsequent degradation. Interacts with EIF4ENIF1/4E-T. Interacts in an RNA-independent manner with BICC1 (via KH domains). Interacts with TEX13A; the interaction may inhibit CNOT1 binding to mRNA and subsequently CNOT1-mediated mRNA degradation.

It localises to the cytoplasm. It is found in the P-body. The protein localises to the nucleus. Functionally, scaffolding component of the CCR4-NOT complex which is one of the major cellular mRNA deadenylases and is linked to various cellular processes including bulk mRNA degradation, miRNA-mediated repression, translational repression during translational initiation and general transcription regulation. Additional complex functions may be a consequence of its influence on mRNA expression. Its scaffolding function implies its interaction with the catalytic complex module and diverse RNA-binding proteins mediating the complex recruitment to selected mRNA 3'UTRs. Involved in degradation of AU-rich element (ARE)-containing mRNAs probably via association with ZFP36. Mediates the recruitment of the CCR4-NOT complex to miRNA targets and to the RISC complex via association with TNRC6A, TNRC6B or TNRC6C. Acts as a transcriptional repressor. Represses the ligand-dependent transcriptional activation by nuclear receptors. Involved in the maintenance of embryonic stem (ES) cell identity; prevents their differentiation towards extraembryonic trophectoderm lineages. Plays a role in rapid sperm motility via mediating timely mRNA turnover. The protein is CCR4-NOT transcription complex subunit 1 (Cnot1) of Mus musculus (Mouse).